Here is a 252-residue protein sequence, read N- to C-terminus: Small ribosomal subunit protein uS3 (252 aa).

One can recognise a KH type-2 domain in the interval 39-111 (IRKLINNFTK…DVNLNVLEVK (73 aa)). Positions 222–252 (KPFASQSSNTPNRRPRNFKGGNNNHVNAKKN) are disordered. Over residues 241–252 (GGNNNHVNAKKN) the composition is skewed to polar residues.

This sequence belongs to the universal ribosomal protein uS3 family. In terms of assembly, part of the 30S ribosomal subunit. Forms a tight complex with proteins S10 and S14.

Binds the lower part of the 30S subunit head. Binds mRNA in the 70S ribosome, positioning it for translation. This Onion yellows phytoplasma (strain OY-M) protein is Small ribosomal subunit protein uS3.